Reading from the N-terminus, the 213-residue chain is Kynurenine formamidase (213 aa).

Residue Trp-18 participates in substrate binding. Residues His-48, His-52, and Asp-54 each coordinate Zn(2+). His-58 acts as the Proton donor/acceptor in catalysis. Residues His-160 and Glu-172 each coordinate Zn(2+).

It belongs to the Cyclase 1 superfamily. KynB family. Homodimer. Zn(2+) serves as cofactor.

The enzyme catalyses N-formyl-L-kynurenine + H2O = L-kynurenine + formate + H(+). It participates in amino-acid degradation; L-tryptophan degradation via kynurenine pathway; L-kynurenine from L-tryptophan: step 2/2. Catalyzes the hydrolysis of N-formyl-L-kynurenine to L-kynurenine, the second step in the kynurenine pathway of tryptophan degradation. The polypeptide is Kynurenine formamidase (Burkholderia orbicola (strain MC0-3)).